The chain runs to 477 residues: Pentatricopeptide repeat-containing protein At5g47360 (477 aa).

PPR repeat units follow at residues 129-163, 164-198, 199-233, 234-264, 273-307, 308-343, 344-378, 379-413, and 416-450; these read NVKT…NVCA, DTVA…GLYP, DVIT…DCVL, NSVT…MEKE, NAVT…GCMP, NRVT…GGVS, LSEC…GVRP, DGLA…DVKS, and DSDI…KMRL.

The protein belongs to the PPR family. P subfamily.

This chain is Pentatricopeptide repeat-containing protein At5g47360, found in Arabidopsis thaliana (Mouse-ear cress).